The sequence spans 472 residues: Cell division protein FtsP (472 aa).

Residues 1-27 (MSLSRRQFIQASGIALCAGAMPLTARA) constitute a signal peptide (tat-type signal).

Belongs to the FtsP family. Predicted to be exported by the Tat system. The position of the signal peptide cleavage has not been experimentally proven.

The protein resides in the periplasm. In terms of biological role, cell division protein that is required for growth during stress conditions. May be involved in protecting or stabilizing the divisomal assembly under conditions of stress. This Dickeya dadantii (strain 3937) (Erwinia chrysanthemi (strain 3937)) protein is Cell division protein FtsP.